Here is a 178-residue protein sequence, read N- to C-terminus: Deoxycytidylate deaminase (178 aa).

In terms of domain architecture, CMP/dCMP-type deaminase spans 14 to 145; the sequence is EWPEYFMAVA…EETTAARLLF (132 aa). His-84 is a Zn(2+) binding site. Glu-86 (proton donor) is an active-site residue. Cys-110 and Cys-113 together coordinate Zn(2+). Ser-174 is subject to Phosphoserine.

This sequence belongs to the cytidine and deoxycytidylate deaminase family. As to quaternary structure, homohexamer. The cofactor is Zn(2+).

It catalyses the reaction dCMP + H2O + H(+) = dUMP + NH4(+). The enzyme catalyses 5-hydroxymethyl-dCMP + H2O + H(+) = 5-hydroxymethyl-dUMP + NH4(+). With respect to regulation, allosteric enzyme whose activity is greatly influenced by the end products of its metabolic pathway, dCTP and dTTP. Catalyzes the deamination of dCMP to dUMP, providing the nucleoside monophosphate substrate for the thymidylate synthase/TYMS. Also, part of a nucleotide salvage pathway that eliminates epigenetically modified 5-hydroxymethyl-dCMP (hmdCMP) in a two-step process entailing deamination to cytotoxic 5-hydroxymethyl-dUMP (hmdUMP), followed by its hydrolysis into 5-hydroxymethyluracil (hmU) and 2-deoxy-D-ribose 5-phosphate (deoxyribosephosphate). Catalyzes the first step in that pathway, the deamination of 5-hydroxymethyl-dCMP (hmdCMP). This is Deoxycytidylate deaminase from Mus musculus (Mouse).